Consider the following 960-residue polypeptide: Glycine dehydrogenase (decarboxylating) (960 aa).

The residue at position 709 (Lys709) is an N6-(pyridoxal phosphate)lysine.

The protein belongs to the GcvP family. In terms of assembly, the glycine cleavage system is composed of four proteins: P, T, L and H. Pyridoxal 5'-phosphate serves as cofactor.

It carries out the reaction N(6)-[(R)-lipoyl]-L-lysyl-[glycine-cleavage complex H protein] + glycine + H(+) = N(6)-[(R)-S(8)-aminomethyldihydrolipoyl]-L-lysyl-[glycine-cleavage complex H protein] + CO2. The glycine cleavage system catalyzes the degradation of glycine. The P protein binds the alpha-amino group of glycine through its pyridoxal phosphate cofactor; CO(2) is released and the remaining methylamine moiety is then transferred to the lipoamide cofactor of the H protein. In Hahella chejuensis (strain KCTC 2396), this protein is Glycine dehydrogenase (decarboxylating).